The primary structure comprises 103 residues: uncharacterized protein (103 aa).

This is an uncharacterized protein from Homo sapiens (Human).